Consider the following 240-residue polypeptide: Uridylate kinase (240 aa).

13–16 (KLSG) is a binding site for ATP. Residues 21-26 (GDKGFG) are involved in allosteric activation by GTP. UMP is bound at residue Gly-55. ATP-binding residues include Gly-56 and Arg-60. Residues Asp-75 and 136-143 (IGNPYFST) each bind UMP. Positions 164, 170, and 173 each coordinate ATP.

It belongs to the UMP kinase family. As to quaternary structure, homohexamer.

The protein resides in the cytoplasm. It catalyses the reaction UMP + ATP = UDP + ADP. It functions in the pathway pyrimidine metabolism; CTP biosynthesis via de novo pathway; UDP from UMP (UMPK route): step 1/1. Allosterically activated by GTP. Inhibited by UTP. Functionally, catalyzes the reversible phosphorylation of UMP to UDP. This is Uridylate kinase from Staphylococcus haemolyticus (strain JCSC1435).